Consider the following 147-residue polypeptide: Ponticulin-like protein C2 (147 aa).

The signal sequence occupies residues methionine 1–alanine 20. A lipid anchor (GPI-like-anchor amidated asparagine) is attached at asparagine 118. Asparagine 118 carries N-linked (GlcNAc...) asparagine glycosylation. The propeptide at serine 119–leucine 147 is removed in mature form.

Belongs to the ponticulin family. In terms of processing, the GPI-like-anchor contains a phosphoceramide group, rather than a phosphatidyl group.

The protein resides in the cell membrane. This chain is Ponticulin-like protein C2 (ponC2), found in Dictyostelium discoideum (Social amoeba).